The chain runs to 124 residues: Fluoride-specific ion channel FluC (124 aa).

4 consecutive transmembrane segments (helical) span residues Phe6–Val26, Phe34–Ala54, Ala69–Leu89, and Phe101–Leu121. Positions 76 and 79 each coordinate Na(+).

Belongs to the fluoride channel Fluc/FEX (TC 1.A.43) family.

It localises to the cell inner membrane. It catalyses the reaction fluoride(in) = fluoride(out). Na(+) is not transported, but it plays an essential structural role and its presence is essential for fluoride channel function. Its function is as follows. Fluoride-specific ion channel. Important for reducing fluoride concentration in the cell, thus reducing its toxicity. This Stutzerimonas stutzeri (strain A1501) (Pseudomonas stutzeri) protein is Fluoride-specific ion channel FluC.